The following is an 89-amino-acid chain: Large ribosomal subunit protein bL27 (89 aa).

The segment at 1-22 (MAHKKGASSSRNGRDSNAQRLG) is disordered. Residues 7–19 (ASSSRNGRDSNAQ) are compositionally biased toward polar residues.

This sequence belongs to the bacterial ribosomal protein bL27 family.

The protein is Large ribosomal subunit protein bL27 of Cutibacterium acnes (strain DSM 16379 / KPA171202) (Propionibacterium acnes).